Consider the following 773-residue polypeptide: Photosystem I P700 chlorophyll a apoprotein A1 (773 aa).

Residues 1 to 27 (MTISPPERGEKAKGAAPTPYDQPVDRD) are disordered. A run of 8 helical transmembrane segments spans residues 80–103 (IFSA…FHGA), 166–189 (LMAL…YHYH), 205–229 (LQHH…HIGA), 315–333 (ISHH…GHMW), 375–398 (WHGQ…HHMY), 414–440 (LGLF…IAMI), 462–484 (AIIS…LYIH), and 564–582 (LMIH…LILL). [4Fe-4S] cluster contacts are provided by Cys606 and Cys615. Helical transmembrane passes span 622-643 (HVFL…HFSW) and 687-709 (ISMY…MFLF). His698 serves as a coordination point for divinylchlorophyll a'. The divinyl chlorophyll a site is built by Met706 and Tyr714. Trp715 serves as a coordination point for phylloquinone. Residues 747–767 (AVGVAHFLLGGIATTWAFFHA) traverse the membrane as a helical segment.

It belongs to the PsaA/PsaB family. As to quaternary structure, the PsaA/B heterodimer binds the P700 divinyl chlorophyll special pair and subsequent electron acceptors. PSI consists of a core antenna complex that captures photons, and an electron transfer chain that converts photonic excitation into a charge separation. The cyanobacterial PSI reaction center is composed of one copy each of PsaA,B,C,D,E,F,I,J,K,L,M and X, and forms trimeric complexes. It depends on PSI electron transfer chain: 5 divinyl chlorophyll a, 1 divinyl chlorophyll a', 2 phylloquinones and 3 4Fe-4S clusters. PSI core antenna: 90 divinyl chlorophyll a, 22 carotenoids, 3 phospholipids and 1 galactolipid. P700 is a divinyl chlorophyll a/divinyl chlorophyll a' dimer, A0 is one or more divinylchlorophyll a, A1 is one or both phylloquinones and FX is a shared 4Fe-4S iron-sulfur center. as a cofactor.

The protein localises to the cellular thylakoid membrane. The enzyme catalyses reduced [plastocyanin] + hnu + oxidized [2Fe-2S]-[ferredoxin] = oxidized [plastocyanin] + reduced [2Fe-2S]-[ferredoxin]. In terms of biological role, psaA and PsaB bind P700, the primary electron donor of photosystem I (PSI), as well as the electron acceptors A0, A1 and FX. PSI is a plastocyanin/cytochrome c6-ferredoxin oxidoreductase, converting photonic excitation into a charge separation, which transfers an electron from the donor P700 chlorophyll pair to the spectroscopically characterized acceptors A0, A1, FX, FA and FB in turn. Oxidized P700 is reduced on the lumenal side of the thylakoid membrane by plastocyanin or cytochrome c6. This chain is Photosystem I P700 chlorophyll a apoprotein A1, found in Prochlorococcus marinus (strain SARG / CCMP1375 / SS120).